The chain runs to 157 residues: MLARLVLGTSGRAALGSVEPALGGLKSIWRCSQAFCSTPKGVTYRELKSLLNSKDIMLIDVRNTLEILEQGKIPGSINIPLDEVGEALQMNPVDFKEKYCQVKPSKSDRLVFSCLAGVRSKKAMDTAISLGFNSAQHYAGGWKEWVTYEISEEKQES.

The region spanning 52–154 is the Rhodanese domain; sequence NSKDIMLIDV…WVTYEISEEK (103 aa). Residue Lys-96 is modified to N6-succinyllysine. The Cysteine persulfide intermediate role is filled by Cys-114.

This chain is Thiosulfate sulfurtransferase/rhodanese-like domain-containing protein 3 (Tstd3), found in Mus musculus (Mouse).